Reading from the N-terminus, the 243-residue chain is Adenosylcobinamide-GDP ribazoletransferase (243 aa).

5 consecutive transmembrane segments (helical) span residues L31–L51, A55–L75, I109–I129, A133–L153, and V188–W208.

The protein belongs to the CobS family. It depends on Mg(2+) as a cofactor.

The protein resides in the cell inner membrane. The catalysed reaction is alpha-ribazole + adenosylcob(III)inamide-GDP = adenosylcob(III)alamin + GMP + H(+). The enzyme catalyses alpha-ribazole 5'-phosphate + adenosylcob(III)inamide-GDP = adenosylcob(III)alamin 5'-phosphate + GMP + H(+). It functions in the pathway cofactor biosynthesis; adenosylcobalamin biosynthesis; adenosylcobalamin from cob(II)yrinate a,c-diamide: step 7/7. In terms of biological role, joins adenosylcobinamide-GDP and alpha-ribazole to generate adenosylcobalamin (Ado-cobalamin). Also synthesizes adenosylcobalamin 5'-phosphate from adenosylcobinamide-GDP and alpha-ribazole 5'-phosphate. The polypeptide is Adenosylcobinamide-GDP ribazoletransferase (Pseudomonas syringae pv. syringae (strain B728a)).